A 443-amino-acid chain; its full sequence is 23S rRNA (uracil(1939)-C(5))-methyltransferase RlmD (443 aa).

Residues 4-66 enclose the TRAM domain; sequence QNRFDRTSFQ…RHFDEARVVE (63 aa). Positions 79, 85, 88, and 167 each coordinate [4Fe-4S] cluster. Glutamine 275, phenylalanine 304, asparagine 309, glutamate 325, aspartate 352, and aspartate 373 together coordinate S-adenosyl-L-methionine. Cysteine 399 serves as the catalytic Nucleophile.

It belongs to the class I-like SAM-binding methyltransferase superfamily. RNA M5U methyltransferase family. RlmD subfamily.

It catalyses the reaction uridine(1939) in 23S rRNA + S-adenosyl-L-methionine = 5-methyluridine(1939) in 23S rRNA + S-adenosyl-L-homocysteine + H(+). Functionally, catalyzes the formation of 5-methyl-uridine at position 1939 (m5U1939) in 23S rRNA. This Xylella fastidiosa (strain 9a5c) protein is 23S rRNA (uracil(1939)-C(5))-methyltransferase RlmD.